The chain runs to 345 residues: MLFIKKYSVGILFTAVLAVISGFISNLIPYRLIGAGVFALLIGMFLNPIVSKYTVLNKGLNFTSKKILRLAIILMGITLSFSQVLEVGKYSLIVMVFTLITAFGGGYLLGKLFKMDWKLSGLISAGTGICGGSAIAAISPVIDAEDSDIAYAISATFIFDVIMVILFPIAGKYFNMTDLGYGLWAGTAVNDTSSVVAAGYAFSDVAGNFSVIVKLTRTLSIVPVVLIFSYINERLIRKTKNENFKGNESTYHKDKINISKIFPWFILLFLVMVAIKSTGIIPNTISHFISKLSKFLMVMSLGAIGLKTNFKSLAKSGFAPAVHGFIISLLVVVVSFLVQMTLGQV.

The next 10 membrane-spanning stretches (helical) occupy residues 7–24 (YSVG…SGFI), 28–50 (IPYR…NPIV), 70–87 (LAII…VLEV), 91–113 (SLIV…GKLF), 120–142 (SGLI…SPVI), 152–174 (AISA…GKYF), 181–203 (YGLW…YAFS), 209–231 (FSVI…FSYI), 261–283 (IFPW…IIPN), and 316–338 (SGFA…SFLV).

It belongs to the UPF0324 family.

It is found in the cell membrane. This Clostridium tetani (strain Massachusetts / E88) protein is UPF0324 membrane protein CTC_01844.